Here is a 110-residue protein sequence, read N- to C-terminus: UPF0367 protein sync_2587 (110 aa).

The protein belongs to the UPF0367 family.

In Synechococcus sp. (strain CC9311), this protein is UPF0367 protein sync_2587.